Reading from the N-terminus, the 1720-residue chain is 6-methylcalicylic acide synthase (1720 aa).

The disordered stretch occupies residues 1–31 (MDKQSASGEIPAMRWEPYHRRDPRNAKELSK). The Ketosynthase family 3 (KS3) domain maps to 1-399 (MDKQSASGEI…GTVSHAVIEQ (399 aa)). Positions 16-30 (EPYHRRDPRNAKELS) are enriched in basic and acidic residues. Catalysis depends on for beta-ketoacyl synthase activity residues cysteine 146, histidine 281, and histidine 321. Residues 509–823 (VWVFSGHGAQ…IAQLHCRGAE (315 aa)) are malonyl-CoA:ACP transacylase (MAT) domain. An N-terminal hotdog fold region spans residues 868 to 987 (HTLLGQRIGI…AYWARDIQEA (120 aa)). The segment at 868–1139 (HTLLGQRIGI…FTAMRFSEIE (272 aa)) is dehydratase (DH) domain. The 277-residue stretch at 868-1144 (HTLLGQRIGI…FSEIEGTPGV (277 aa)) folds into the PKS/mFAS DH domain. Residue histidine 900 is the Proton acceptor; for dehydratase activity of the active site. Residues 1001–1144 (GTRIRDDFSI…FSEIEGTPGV (144 aa)) form a C-terminal hotdog fold region. Residue aspartate 1065 is the Proton donor; for dehydratase activity of the active site. A product template (PT) domain region spans residues 1148-1545 (MESLVHQLAW…AVAVQWTSWR (398 aa)). A Carrier domain is found at 1644–1718 (VYLDEKIRGC…HLVGWFAEKV (75 aa)). Residue serine 1678 is modified to O-(pantetheine 4'-phosphoryl)serine.

It localises to the cytoplasm. The protein localises to the cytosol. It carries out the reaction 3 malonyl-CoA + acetyl-CoA + NADPH + 3 H(+) = 6-methylsalicylate + 3 CO2 + NADP(+) + 4 CoA + H2O. Its pathway is mycotoxin biosynthesis; patulin biosynthesis. Its function is as follows. 6-methylsalicylic acid synthase; part of the gene cluster that mediates the biosynthesis of patulin, an acetate-derived tetraketide mycotoxin produced by several fungal species that shows antimicrobial properties against several bacteria. PatK catalyzes the first step of the pathway which is the synthesis of 6-methylsalicylic acid via condensation of 1 acetate and 3 malonate units. The pathway begins with the synthesis of 6-methylsalicylic acid by the polyketide synthase (PKS) patK via condensation of acetate and malonate units. The 6-methylsalicylic acid decarboxylase patG then catalyzes the decarboxylation of 6-methylsalicylic acid to yield m-cresol (also known as 3-methylphenol). These first reactions occur in the cytosol. The intermediate m-cresol is then transported into the endoplasmic reticulum where the cytochrome P450 monooxygenase patH converts it to m-hydroxybenzyl alcohol, which is further converted to gentisyl alcohol by the cytochrome P450 monooxygenase patI. The oxidoreductases patJ and patO further convert gentisyl alcohol to isoepoxydon in the vacuole. PatN catalyzes then the transformation of isoepoxydon into phyllostine. The cluster protein patF is responsible for the conversion from phyllostine to neopatulin whereas the alcohol dehydrogenase patD converts neopatulin to E-ascladiol. The steps between isoepoxydon and E-ascladiol occur in the cytosol, and E-ascladiol is probably secreted to the extracellular space by one of the cluster-specific transporters patC or patM. Finally, the secreted patulin synthase patE catalyzes the conversion of E-ascladiol to patulin. This chain is 6-methylcalicylic acide synthase, found in Aspergillus clavatus (strain ATCC 1007 / CBS 513.65 / DSM 816 / NCTC 3887 / NRRL 1 / QM 1276 / 107).